Consider the following 616-residue polypeptide: D-glutamate cyclase, mitochondrial (616 aa).

The transit peptide at 1-28 (MPFTLHLRSRLPSAIRSLILQKKPNIRN) directs the protein to the mitochondrion.

Belongs to the D-glutamate cyclase family.

Its subcellular location is the mitochondrion matrix. It carries out the reaction D-glutamate = 5-oxo-D-proline + H2O. Functionally, D-glutamate cyclase that converts D-glutamate to 5-oxo-D-proline. The polypeptide is D-glutamate cyclase, mitochondrial (Homo sapiens (Human)).